The chain runs to 522 residues: Sensory neuron membrane protein 1 (522 aa).

The Cytoplasmic portion of the chain corresponds to 1-11 (MQLAKPLKYAA). Residues 12 to 32 (ISGIVAFVGLMFGWVIFPAIL) form a helical membrane-spanning segment. Residues 33-458 (KSQLKKEMAL…SQLFIPKRVV (426 aa)) lie on the Extracellular side of the membrane. Asn67, Asn105, and Asn229 each carry an N-linked (GlcNAc...) asparagine glycan. Intrachain disulfides connect Cys268–Cys333, Cys297–Cys352, and Cys335–Cys341. N-linked (GlcNAc...) asparagine glycosylation is present at Asn440. The helical transmembrane segment at 459–479 (SVVCWCMISFGSLGVIAAVIF) threads the bilayer. Over 480–522 (HFKGDIMHLAVAGDNSVSKIKPENDENKEVGVMGQNQEPAKVM) the chain is Cytoplasmic. The tract at residues 500–522 (KPENDENKEVGVMGQNQEPAKVM) is disordered. Over residues 513–522 (GQNQEPAKVM) the composition is skewed to polar residues.

This sequence belongs to the CD36 family. In terms of tissue distribution, principal component of the olfactory cilia membrane. Detected in both male and female antennae but not present in leg, abdomen, thorax or head.

It is found in the cell membrane. In terms of biological role, plays an olfactory role that is not restricted to pheromone sensitivity. The protein is Sensory neuron membrane protein 1 of Bombyx mori (Silk moth).